An 867-amino-acid polypeptide reads, in one-letter code: Glutamate receptor 1.2 (867 aa).

Positions 1–27 (MVRICIQTPILLSFLLVLLFFISNCFA) are cleaved as a signal peptide. Residues 28–560 (SSQNNDDDKR…SMWVFFQPLT (533 aa)) lie on the Extracellular side of the membrane. Residues asparagine 301, asparagine 400, asparagine 496, and asparagine 499 are each glycosylated (N-linked (GlcNAc...) asparagine). Residues 561–581 (PNLWITSAAFFVLTGIIVWLI) form a helical membrane-spanning segment. The Cytoplasmic segment spans residues 582-590 (ERAENKEFQ). Residues 591 to 611 (GSWPQQIGVVIWFGFSTLVYA) form a helical membrane-spanning segment. Residues 612 to 622 (HREKLQHNLSR) are Cytoplasmic-facing. A helical membrane pass occupies residues 623-643 (FVVTVWVFAVLILVTSYTATL). Residues 644–792 (TSMMTVQQIR…NPITLYRFRG (149 aa)) lie on the Extracellular side of the membrane. N-linked (GlcNAc...) asparagine glycosylation is found at asparagine 676, asparagine 688, asparagine 699, and asparagine 748. Residues 793–813 (LFMITGVSFAFALAVLLILWL) form a helical membrane-spanning segment. Residues 814 to 867 (RERWEILVNSVNIYFSQRLRHFRILFTRTIHPSPLGLDNPIGENAVQMAQRNRR) are Cytoplasmic-facing.

Belongs to the glutamate-gated ion channel (TC 1.A.10.1) family. In terms of assembly, may form heteromers. As to expression, expressed predominantly in roots and siliques.

Its subcellular location is the membrane. Functionally, glutamate-gated receptor that probably acts as a non-selective cation channel. May be involved in light-signal transduction and calcium homeostasis via the regulation of calcium influx into cells. This chain is Glutamate receptor 1.2 (GLR1.2), found in Arabidopsis thaliana (Mouse-ear cress).